The primary structure comprises 257 residues: NAD-capped RNA hydrolase NudC (257 aa).

Arginine 69 is a binding site for substrate. Residues cysteine 98 and cysteine 101 each coordinate Zn(2+). Substrate is bound at residue glutamate 111. The Zn(2+) site is built by cysteine 116 and cysteine 119. A substrate-binding site is contributed by tyrosine 124. Positions 125 to 248 constitute a Nudix hydrolase domain; that stretch reads PQIAPCIIVA…TVARRLIEDT (124 aa). Residues alanine 158, glutamate 174, and glutamate 178 each coordinate a divalent metal cation. The Nudix box motif lies at 159–180; the sequence is GFVEVGETLEQAVAREVMEESG. Position 192–199 (192–199) interacts with substrate; sequence QPWPFPQS. Glutamate 219 is an a divalent metal cation binding site. Alanine 241 is a substrate binding site.

It belongs to the Nudix hydrolase family. NudC subfamily. As to quaternary structure, homodimer. Requires Mg(2+) as cofactor. The cofactor is Mn(2+). Zn(2+) serves as cofactor.

It catalyses the reaction a 5'-end NAD(+)-phospho-ribonucleoside in mRNA + H2O = a 5'-end phospho-adenosine-phospho-ribonucleoside in mRNA + beta-nicotinamide D-ribonucleotide + 2 H(+). It carries out the reaction NAD(+) + H2O = beta-nicotinamide D-ribonucleotide + AMP + 2 H(+). The enzyme catalyses NADH + H2O = reduced beta-nicotinamide D-ribonucleotide + AMP + 2 H(+). Its function is as follows. mRNA decapping enzyme that specifically removes the nicotinamide adenine dinucleotide (NAD) cap from a subset of mRNAs by hydrolyzing the diphosphate linkage to produce nicotinamide mononucleotide (NMN) and 5' monophosphate mRNA. The NAD-cap is present at the 5'-end of some mRNAs and stabilizes RNA against 5'-processing. Has preference for mRNAs with a 5'-end purine. Catalyzes the hydrolysis of a broad range of dinucleotide pyrophosphates. This Salmonella heidelberg (strain SL476) protein is NAD-capped RNA hydrolase NudC.